Here is a 227-residue protein sequence, read N- to C-terminus: PKHD-type hydroxylase Patl_2273 (227 aa).

Positions Lys78–Ser178 constitute a Fe2OG dioxygenase domain. Residues His96, Asp98, and His159 each contribute to the Fe cation site. Arg169 is a 2-oxoglutarate binding site.

It depends on Fe(2+) as a cofactor. Requires L-ascorbate as cofactor.

This is PKHD-type hydroxylase Patl_2273 from Pseudoalteromonas atlantica (strain T6c / ATCC BAA-1087).